Reading from the N-terminus, the 497-residue chain is Early growth response protein 1-A (497 aa).

Low complexity predominate over residues 139–165; sequence SPSSAPSSSPSSSSSSSSSQSPPLSCS. Disordered stretches follow at residues 139–169, 175–194, and 286–309; these read SPSS…VQSN, YSAA…DHSP, and PSRM…YGCP. 3 consecutive C2H2-type zinc fingers follow at residues 306 to 330, 336 to 358, and 364 to 386; these read YGCP…IRIH, FQCR…IRTH, and FACD…TKIH. Positions 377–441 are disordered; that stretch reads DERKRHTKIH…SYPSPVHSSF (65 aa). The segment covering 381 to 391 has biased composition (basic residues); sequence RHTKIHLRQKD. The segment covering 397–441 has biased composition (low complexity); that stretch reads ATPVSVASPVSSYSPSASTSYPSPVPTSYSSPVSSSYPSPVHSSF.

The protein belongs to the EGR C2H2-type zinc-finger protein family. As to expression, expressed in the presumptive mesoderm. In blastula embryos, expressed in the dorsal marginal zone, and at the onset of gastrulation expression is specific to the Spemann organizer. As gastrulation proceeds, expressed in a ring around the yolk plug. This expression is maintained in advanced gastrulae, with weak expression also extending into the dorsal midline. By the neurula stage, expression is excluded from the notochord. In late tailbud stages, expressed in two spots in the anterior forebrain, which are connected via a bridge of cells that also show expression.

It localises to the nucleus. The protein resides in the cytoplasm. In terms of biological role, transcriptional regulator. Recognizes and binds to the DNA sequence 5'-GCG(T/G)GGGCG-3'(EGR-site) in the promoter region of target genes. Binds double-stranded target DNA, irrespective of the cytosine methylation status. Regulates the transcription of numerous target genes, and thereby plays an important role in regulating the response to growth factors, DNA damage, and ischemia. Plays a role in the regulation of cell survival, proliferation and cell death. Mediates responses to ischemia and hypoxia; regulates the expression of proteins that are involved in inflammatory processes. Plays a role in regulating the expression of circadian clock genes. The sequence is that of Early growth response protein 1-A (egr1-a) from Xenopus laevis (African clawed frog).